A 639-amino-acid chain; its full sequence is Chaperone protein HtpG (639 aa).

Residues M1–R347 are a; substrate-binding. Residues E348 to K564 are b. The tract at residues L565–K639 is c.

It belongs to the heat shock protein 90 family. As to quaternary structure, homodimer.

It localises to the cytoplasm. Molecular chaperone. Has ATPase activity. The polypeptide is Chaperone protein HtpG (Shewanella halifaxensis (strain HAW-EB4)).